Reading from the N-terminus, the 510-residue chain is Ribose import ATP-binding protein RbsA 1 (510 aa).

2 ABC transporter domains span residues 20–256 and 266–510; these read LEMR…VGRD and VTLG…TGNA. Residue 52–59 participates in ATP binding; the sequence is GENGAGKS.

It belongs to the ABC transporter superfamily. Ribose importer (TC 3.A.1.2.1) family. As to quaternary structure, the complex is composed of an ATP-binding protein (RbsA), two transmembrane proteins (RbsC) and a solute-binding protein (RbsB).

The protein localises to the cell inner membrane. The catalysed reaction is D-ribose(out) + ATP + H2O = D-ribose(in) + ADP + phosphate + H(+). Its function is as follows. Part of the ABC transporter complex RbsABC involved in ribose import. Responsible for energy coupling to the transport system. In Agrobacterium fabrum (strain C58 / ATCC 33970) (Agrobacterium tumefaciens (strain C58)), this protein is Ribose import ATP-binding protein RbsA 1.